Here is a 337-residue protein sequence, read N- to C-terminus: P2Y purinoceptor 14 (337 aa).

The Extracellular segment spans residues Met1–Tyr28. Asn2 carries N-linked (GlcNAc...) asparagine glycosylation. The helical transmembrane segment at Phe29–Val49 threads the bilayer. The Cytoplasmic portion of the chain corresponds to Pro50 to Ser54. The chain crosses the membrane as a helical span at residues Phe55–Phe75. Residues Lys76–Val95 are Extracellular-facing. A disulfide bridge links Cys93 with Cys171. Residues Ser96 to Phe116 form a helical membrane-spanning segment. Topologically, residues Asp117–Lys138 are cytoplasmic. A helical transmembrane segment spans residues Leu139 to Thr159. The Extracellular portion of the chain corresponds to Asn160 to Ser187. N-linked (GlcNAc...) asparagine glycosylation occurs at Asn162. The helical transmembrane segment at Tyr188–Ile208 threads the bilayer. Over Thr209 to Asn233 the chain is Cytoplasmic. Residues Ile234–Pro254 form a helical membrane-spanning segment. At Tyr255–Glu277 the chain is on the extracellular side. Residues Phe278 to Cys298 form a helical membrane-spanning segment. At Gln299–Leu337 the chain is on the cytoplasmic side.

This sequence belongs to the G-protein coupled receptor 1 family.

It is found in the cell membrane. Receptor for UDP-glucose and other UDP-sugar coupled to G-proteins. Not activated by ATP, ADP, UTP or ATP. This Bos taurus (Bovine) protein is P2Y purinoceptor 14 (P2RY14).